The primary structure comprises 310 residues: Deoxypodophyllotoxin synthase (310 aa).

The region spanning 159–258 (STNYLLHFMR…RLSTSSFSFP (100 aa)) is the Fe2OG dioxygenase domain. Residues His184, Asp186, and His239 each coordinate Fe cation. Position 249 (Arg249) interacts with 2-oxoglutarate.

Belongs to the iron/ascorbate-dependent oxidoreductase family. It depends on Fe(2+) as a cofactor. In terms of tissue distribution, mostly expressed in leaves and stems.

The catalysed reaction is (-)-yatein + 2-oxoglutarate + O2 = (-)-deoxypodophyllotoxin + succinate + CO2 + H2O. It functions in the pathway aromatic compound metabolism; phenylpropanoid biosynthesis. 2-oxoglutarate-dependent dioxygenase involved in the biosynthesis of etoposide, a chemotherapeutic compound of the topoisomerase inhibitor family. Catalyzes the conversion of yatein to deoxypodophyllotoxin. Can also use, to some extent, demethylyatein as substrate. In Sinopodophyllum hexandrum (Himalayan may apple), this protein is Deoxypodophyllotoxin synthase.